Reading from the N-terminus, the 170-residue chain is uncharacterized protein (170 aa).

The 148-residue stretch at 1-148 (MVKSQKVIDV…TIHDFFENAT (148 aa)) folds into the Ferritin-like diiron domain.

This is an uncharacterized protein from Ureaplasma parvum serovar 3 (strain ATCC 700970).